Reading from the N-terminus, the 492-residue chain is Trehalose-6-phosphate synthase (492 aa).

Position 25 (Arg-25) interacts with D-glucose 6-phosphate. 45–46 (GG) contributes to the UDP-alpha-D-glucose binding site. The D-glucose 6-phosphate site is built by Tyr-101 and Asp-155. 2 residues coordinate UDP-alpha-D-glucose: Arg-297 and Lys-302. Arg-335 serves as a coordination point for D-glucose 6-phosphate. 400-404 (LVAKE) lines the UDP-alpha-D-glucose pocket.

This sequence belongs to the glycosyltransferase 20 family. As to quaternary structure, homotetramer.

The catalysed reaction is ADP-alpha-D-glucose + D-glucose 6-phosphate = alpha,alpha-trehalose 6-phosphate + ADP + H(+). The enzyme catalyses CDP-alpha-D-glucose + D-glucose 6-phosphate = alpha,alpha-trehalose 6-phosphate + CDP + H(+). It catalyses the reaction GDP-alpha-D-glucose + D-glucose 6-phosphate = alpha,alpha-trehalose 6-phosphate + GDP + H(+). It carries out the reaction TDP-alpha-D-glucose + D-glucose 6-phosphate = 5-methyl-UDP + alpha,alpha-trehalose 6-phosphate + H(+). The catalysed reaction is D-glucose 6-phosphate + UDP-alpha-D-glucose = alpha,alpha-trehalose 6-phosphate + UDP + H(+). The protein operates within glycan biosynthesis; trehalose biosynthesis. Its function is as follows. Probably involved in the osmoprotection via the biosynthesis of trehalose and in the production of glycogen and alpha-glucan via the TreS-Pep2 branch involved in the biosynthesis of maltose-1-phosphate (M1P). Catalyzes the transfer of glucose from UDP-glucose (UDP-Glc) to D-glucose 6-phosphate (Glc-6-P) to form trehalose-6-phosphate. Probably also able to use ADP-Glc, CDP-Glc, GDP-Glc and TDP-Glc as glucosyl donors. In Mycobacterium avium (strain 104), this protein is Trehalose-6-phosphate synthase.